The following is a 289-amino-acid chain: Glucosamine-6-phosphate deaminase 1 (289 aa).

Lys-64 is subject to N6-acetyllysine. Residue Asp-72 is the Proton acceptor; for enolization step of the active site. Asp-141 (for ring-opening step) is an active-site residue. His-143 functions as the Proton acceptor; for ring-opening step in the catalytic mechanism. Glu-148 serves as the catalytic For ring-opening step. The residue at position 161 (Thr-161) is a Phosphothreonine.

The protein belongs to the glucosamine/galactosamine-6-phosphate isomerase family. As to quaternary structure, homohexamer.

The protein localises to the cytoplasm. It catalyses the reaction alpha-D-glucosamine 6-phosphate + H2O = beta-D-fructose 6-phosphate + NH4(+). It functions in the pathway nucleotide-sugar biosynthesis; UDP-N-acetyl-alpha-D-glucosamine biosynthesis; alpha-D-glucosamine 6-phosphate from D-fructose 6-phosphate: step 1/1. Its activity is regulated as follows. Allosterically activated by N-acetylglucosamine-6-phosphate (GlcNAc6P). Functionally, catalyzes the reversible conversion of alpha-D-glucosamine 6-phosphate (GlcN-6P) into beta-D-fructose 6-phosphate (Fru-6P) and ammonium ion, a regulatory reaction step in de novo uridine diphosphate-N-acetyl-alpha-D-glucosamine (UDP-GlcNAc) biosynthesis via hexosamine pathway. Deamination is coupled to aldo-keto isomerization mediating the metabolic flux from UDP-GlcNAc toward Fru-6P. At high ammonium level can drive amination and isomerization of Fru-6P toward hexosamines and UDP-GlcNAc synthesis. Has a role in fine tuning the metabolic fluctuations of cytosolic UDP-GlcNAc and their effects on hyaluronan synthesis that occur during tissue remodeling. Seems to trigger calcium oscillations in mammalian eggs. These oscillations serve as the essential trigger for egg activation and early development of the embryo. The protein is Glucosamine-6-phosphate deaminase 1 of Pongo abelii (Sumatran orangutan).